Consider the following 288-residue polypeptide: Executioner caspase (288 aa).

Residue C131 is part of the active site.

It belongs to the peptidase C14A family.

Functionally, may induce host cell apoptosis and contribute of the establishment of a special cell cleavage process in which apoppotic bodies are rescued by the virus and differentiate to form large vesicles in which virion assembles. The chain is Executioner caspase from Spodoptera frugiperda ascovirus 1a (SfAV-1a).